The following is a 380-amino-acid chain: S-adenosylmethionine:tRNA ribosyltransferase-isomerase (380 aa).

Positions 1 to 15 are enriched in basic and acidic residues; sequence MHSKHPTDTARRCET. Positions 1–24 are disordered; it reads MHSKHPTDTARRCETGTDSSDTAA.

The protein belongs to the QueA family. As to quaternary structure, monomer.

The protein resides in the cytoplasm. The enzyme catalyses 7-aminomethyl-7-carbaguanosine(34) in tRNA + S-adenosyl-L-methionine = epoxyqueuosine(34) in tRNA + adenine + L-methionine + 2 H(+). Its pathway is tRNA modification; tRNA-queuosine biosynthesis. Functionally, transfers and isomerizes the ribose moiety from AdoMet to the 7-aminomethyl group of 7-deazaguanine (preQ1-tRNA) to give epoxyqueuosine (oQ-tRNA). This chain is S-adenosylmethionine:tRNA ribosyltransferase-isomerase, found in Oleidesulfovibrio alaskensis (strain ATCC BAA-1058 / DSM 17464 / G20) (Desulfovibrio alaskensis).